A 576-amino-acid chain; its full sequence is uncharacterized protein (576 aa).

It belongs to the chlamydial CPn_0065/CT_288/TC_0561 family.

This is an uncharacterized protein from Chlamydia pneumoniae (Chlamydophila pneumoniae).